The primary structure comprises 364 residues: NF-kappa-B inhibitor epsilon (364 aa).

The tract at residues M1 to L108 is disordered. Position 18 is a phosphoserine (S18). The span at P36 to P48 shows a compositional bias: low complexity. A compositionally biased stretch (basic and acidic residues) spans H51–D70. Residues P93–P104 are compositionally biased toward pro residues. 6 ANK repeats span residues D122 to N155, L157 to L186, H190 to R219, Q233 to V262, S267 to A296, and N300 to L329.

The protein belongs to the NF-kappa-B inhibitor family. In terms of assembly, interacts with RELA, REL, NFKB1 nuclear factor NF-kappa-B p50 subunit and NFKB2 nuclear factor NF-kappa-B p52 subunit. Interacts with HNRNPA2B1; the interaction may be mediated by the RRM2 domain of HNRNPA2B1, and HNRNPA2B1 may interact simultaneously with FAM76B and either NFKBIA or NFKBIE to form a complex. In terms of processing, serine phosphorylated; followed by proteasome-dependent degradation.

The protein resides in the cytoplasm. Sequesters NF-kappa-B transcription factor complexes in the cytoplasm, thereby inhibiting their activity. Sequestered complexes include NFKB1/p50-RELA/p65 and NFKB1/p50-REL/c-Rel complexes. Limits B-cell activation in response to pathogens, and also plays an important role in B-cell development. In Mus musculus (Mouse), this protein is NF-kappa-B inhibitor epsilon (Nfkbie).